Reading from the N-terminus, the 136-residue chain is Large-conductance mechanosensitive channel (136 aa).

Transmembrane regions (helical) follow at residues 10-30 (FAMR…AAFG) and 76-96 (GVFI…FMAI).

This sequence belongs to the MscL family. Homopentamer.

It localises to the cell inner membrane. In terms of biological role, channel that opens in response to stretch forces in the membrane lipid bilayer. May participate in the regulation of osmotic pressure changes within the cell. This is Large-conductance mechanosensitive channel from Escherichia coli O139:H28 (strain E24377A / ETEC).